The chain runs to 153 residues: Large ribosomal subunit protein uL15 (153 aa).

The tract at residues 21–41 is disordered; sequence RGIGSGKGKTGGRGIKGQKSR. Over residues 23-35 the composition is skewed to gly residues; the sequence is IGSGKGKTGGRGI.

Belongs to the universal ribosomal protein uL15 family. As to quaternary structure, part of the 50S ribosomal subunit.

Its function is as follows. Binds to the 23S rRNA. In Rickettsia felis (strain ATCC VR-1525 / URRWXCal2) (Rickettsia azadi), this protein is Large ribosomal subunit protein uL15.